We begin with the raw amino-acid sequence, 198 residues long: Urease accessory protein UreE (198 aa).

Residues 137–198 (ARGAYHSPGG…RGHDHDHKHD (62 aa)) form a disordered region. Residues 149–198 (HGHDHDHNHDHGHDHAHDHNHGHDHDHEHGYEHEHEHRHDRGHDHDHKHD) are compositionally biased toward basic and acidic residues.

This sequence belongs to the UreE family.

It is found in the cytoplasm. Functionally, involved in urease metallocenter assembly. Binds nickel. Probably functions as a nickel donor during metallocenter assembly. The chain is Urease accessory protein UreE from Rhizobium johnstonii (strain DSM 114642 / LMG 32736 / 3841) (Rhizobium leguminosarum bv. viciae).